We begin with the raw amino-acid sequence, 271 residues long: Transmembrane protein 150A (271 aa).

Over 1–3 (MTG) the chain is Cytoplasmic. Residues 4 to 24 (WIVLPISLTAFSIPGIWIVYA) traverse the membrane as a helical segment. Topologically, residues 25-75 (MAVMNHHVCPVENWTYNLTCTDDNTKAGTPKSCCTLEDVPLISKCGTYPPE) are extracellular. N-linked (GlcNAc...) asparagine glycosylation is found at asparagine 37 and asparagine 41. A helical membrane pass occupies residues 76-96 (SCLFSLIGNVGAFMVVIICLL). The Cytoplasmic segment spans residues 97–108 (RYSQVIEISQRS). The helical transmembrane segment at 109-129 (WLNTTALIAGCTNAAGLVMVG) threads the bilayer. Residues 130 to 140 (NFQVDYAKSLH) are Extracellular-facing. A helical membrane pass occupies residues 141–161 (YIGAGVAFPAGLLFVCLSSIL). Residues 162–182 (SYQLAASALDYWLGHLRVSLT) are Cytoplasmic-facing. Residues 183–203 (IVALISLVLTGVFFIQESFLM) traverse the membrane as a helical segment. Residues 204–205 (QH) lie on the Extracellular side of the membrane. A helical membrane pass occupies residues 206 to 226 (LVAICEWIFVLDILVFYGTFA). Topologically, residues 227–271 (YEFGSVSTDTMMAALQSSAARSCKSPGSSSTSTQLHCNAERIAMI) are cytoplasmic.

This sequence belongs to the DRAM/TMEM150 family.

The protein resides in the cell membrane. Regulates localization of phosphatidylinositol 4-kinase (PI4K) to the plasma membrane. This chain is Transmembrane protein 150A (tmem150a), found in Xenopus laevis (African clawed frog).